The sequence spans 153 residues: SsrA-binding protein (153 aa).

It belongs to the SmpB family.

The protein localises to the cytoplasm. Its function is as follows. Required for rescue of stalled ribosomes mediated by trans-translation. Binds to transfer-messenger RNA (tmRNA), required for stable association of tmRNA with ribosomes. tmRNA and SmpB together mimic tRNA shape, replacing the anticodon stem-loop with SmpB. tmRNA is encoded by the ssrA gene; the 2 termini fold to resemble tRNA(Ala) and it encodes a 'tag peptide', a short internal open reading frame. During trans-translation Ala-aminoacylated tmRNA acts like a tRNA, entering the A-site of stalled ribosomes, displacing the stalled mRNA. The ribosome then switches to translate the ORF on the tmRNA; the nascent peptide is terminated with the 'tag peptide' encoded by the tmRNA and targeted for degradation. The ribosome is freed to recommence translation, which seems to be the essential function of trans-translation. The protein is SsrA-binding protein of Lactobacillus delbrueckii subsp. bulgaricus (strain ATCC 11842 / DSM 20081 / BCRC 10696 / JCM 1002 / NBRC 13953 / NCIMB 11778 / NCTC 12712 / WDCM 00102 / Lb 14).